A 215-amino-acid polypeptide reads, in one-letter code: Small ribosomal subunit protein uS7 (215 aa).

The protein belongs to the universal ribosomal protein uS7 family. In terms of assembly, part of the 30S ribosomal subunit.

Its function is as follows. One of the primary rRNA binding proteins, it binds directly to 16S rRNA where it nucleates assembly of the head domain of the 30S subunit. Is located at the subunit interface close to the decoding center. The protein is Small ribosomal subunit protein uS7 of Thermococcus gammatolerans (strain DSM 15229 / JCM 11827 / EJ3).